Consider the following 154-residue polypeptide: Probable chemoreceptor glutamine deamidase CheD (154 aa).

The protein belongs to the CheD family.

It catalyses the reaction L-glutaminyl-[protein] + H2O = L-glutamyl-[protein] + NH4(+). Functionally, probably deamidates glutamine residues to glutamate on methyl-accepting chemotaxis receptors (MCPs), playing an important role in chemotaxis. The sequence is that of Probable chemoreceptor glutamine deamidase CheD from Methanococcus maripaludis (strain DSM 14266 / JCM 13030 / NBRC 101832 / S2 / LL).